Reading from the N-terminus, the 81-residue chain is Photosystem I iron-sulfur center (81 aa).

2 consecutive 4Fe-4S ferredoxin-type domains span residues 2 to 31 (SHSVKIYDTCIGCTQCVRACPTDVLEMIPW) and 39 to 68 (IASAPRTEDCVGCKRCESACPTDFLSVRVY). [4Fe-4S] cluster is bound by residues Cys-11, Cys-14, Cys-17, Cys-21, Cys-48, Cys-51, Cys-54, and Cys-58.

The eukaryotic PSI reaction center is composed of at least 11 subunits. The cofactor is [4Fe-4S] cluster.

It is found in the plastid. It localises to the chloroplast thylakoid membrane. The enzyme catalyses reduced [plastocyanin] + hnu + oxidized [2Fe-2S]-[ferredoxin] = oxidized [plastocyanin] + reduced [2Fe-2S]-[ferredoxin]. Its function is as follows. Apoprotein for the two 4Fe-4S centers FA and FB of photosystem I (PSI); essential for photochemical activity. FB is the terminal electron acceptor of PSI, donating electrons to ferredoxin. The C-terminus interacts with PsaA/B/D and helps assemble the protein into the PSI complex. Required for binding of PsaD and PsaE to PSI. PSI is a plastocyanin-ferredoxin oxidoreductase, converting photonic excitation into a charge separation, which transfers an electron from the donor P700 chlorophyll pair to the spectroscopically characterized acceptors A0, A1, FX, FA and FB in turn. The chain is Photosystem I iron-sulfur center from Triticum aestivum (Wheat).